Here is a 223-residue protein sequence, read N- to C-terminus: Putative N-acetylmannosamine-6-phosphate 2-epimerase (223 aa).

The protein belongs to the NanE family.

It catalyses the reaction an N-acyl-D-glucosamine 6-phosphate = an N-acyl-D-mannosamine 6-phosphate. It participates in amino-sugar metabolism; N-acetylneuraminate degradation; D-fructose 6-phosphate from N-acetylneuraminate: step 3/5. Its function is as follows. Converts N-acetylmannosamine-6-phosphate (ManNAc-6-P) to N-acetylglucosamine-6-phosphate (GlcNAc-6-P). This is Putative N-acetylmannosamine-6-phosphate 2-epimerase from Clostridioides difficile (strain 630) (Peptoclostridium difficile).